Here is a 378-residue protein sequence, read N- to C-terminus: Erythronate-4-phosphate dehydrogenase (378 aa).

2 residues coordinate substrate: Ser-45 and Thr-66. Residues Asp-146 and Thr-175 each coordinate NAD(+). Arg-208 is a catalytic residue. Asp-232 lines the NAD(+) pocket. The active site involves Glu-237. Catalysis depends on His-254, which acts as the Proton donor. Residue Gly-257 coordinates NAD(+). Tyr-258 serves as a coordination point for substrate.

It belongs to the D-isomer specific 2-hydroxyacid dehydrogenase family. PdxB subfamily. In terms of assembly, homodimer.

It is found in the cytoplasm. The enzyme catalyses 4-phospho-D-erythronate + NAD(+) = (R)-3-hydroxy-2-oxo-4-phosphooxybutanoate + NADH + H(+). Its pathway is cofactor biosynthesis; pyridoxine 5'-phosphate biosynthesis; pyridoxine 5'-phosphate from D-erythrose 4-phosphate: step 2/5. Its function is as follows. Catalyzes the oxidation of erythronate-4-phosphate to 3-hydroxy-2-oxo-4-phosphonooxybutanoate. This is Erythronate-4-phosphate dehydrogenase from Escherichia coli O45:K1 (strain S88 / ExPEC).